The sequence spans 543 residues: 2,3-bisphosphoglycerate-independent phosphoglycerate mutase (543 aa).

Aspartate 20 and serine 73 together coordinate Mn(2+). Residue serine 73 is the Phosphoserine intermediate of the active site. Residues histidine 134, 166-167 (RD), arginine 198, arginine 204, 278-281 (RGDR), and lysine 360 each bind substrate. Mn(2+) is bound by residues aspartate 428, histidine 432, aspartate 469, histidine 470, and histidine 488.

Belongs to the BPG-independent phosphoglycerate mutase family. In terms of assembly, monomer. Mn(2+) is required as a cofactor.

It carries out the reaction (2R)-2-phosphoglycerate = (2R)-3-phosphoglycerate. It functions in the pathway carbohydrate degradation; glycolysis; pyruvate from D-glyceraldehyde 3-phosphate: step 3/5. In terms of biological role, catalyzes the interconversion of 2-phosphoglycerate and 3-phosphoglycerate. The protein is 2,3-bisphosphoglycerate-independent phosphoglycerate mutase of Rhodopirellula baltica (strain DSM 10527 / NCIMB 13988 / SH1).